Reading from the N-terminus, the 33-residue chain is Brevinin-2Ea (33 aa).

Cysteine 27 and cysteine 33 form a disulfide bridge.

The protein belongs to the frog skin active peptide (FSAP) family. Brevinin subfamily. As to expression, expressed by the skin glands.

It is found in the secreted. Functionally, shows antibacterial activity against representative Gram-negative and Gram-positive bacterial species, and hemolytic activity. The sequence is that of Brevinin-2Ea from Pelophylax lessonae (Pool frog).